The sequence spans 853 residues: DNA mismatch repair protein MutS (853 aa).

613–620 (GPNMGGKS) is an ATP binding site.

This sequence belongs to the DNA mismatch repair MutS family.

Its function is as follows. This protein is involved in the repair of mismatches in DNA. It is possible that it carries out the mismatch recognition step. This protein has a weak ATPase activity. The sequence is that of DNA mismatch repair protein MutS from Vibrio parahaemolyticus serotype O3:K6 (strain RIMD 2210633).